A 1026-amino-acid chain; its full sequence is Isoleucine--tRNA ligase (1026 aa).

A 'HIGH' region motif is present at residues Pro51 to His61. A 'KMSKS' region motif is present at residues Lys591–Ser595. Lys594 provides a ligand contact to ATP.

The protein belongs to the class-I aminoacyl-tRNA synthetase family. IleS type 2 subfamily. As to quaternary structure, monomer. Requires Zn(2+) as cofactor.

It is found in the cytoplasm. The catalysed reaction is tRNA(Ile) + L-isoleucine + ATP = L-isoleucyl-tRNA(Ile) + AMP + diphosphate. Its function is as follows. Catalyzes the attachment of isoleucine to tRNA(Ile). As IleRS can inadvertently accommodate and process structurally similar amino acids such as valine, to avoid such errors it has two additional distinct tRNA(Ile)-dependent editing activities. One activity is designated as 'pretransfer' editing and involves the hydrolysis of activated Val-AMP. The other activity is designated 'posttransfer' editing and involves deacylation of mischarged Val-tRNA(Ile). The protein is Isoleucine--tRNA ligase of Thermoplasma acidophilum (strain ATCC 25905 / DSM 1728 / JCM 9062 / NBRC 15155 / AMRC-C165).